The chain runs to 379 residues: Methionine aminopeptidase 1 (379 aa).

The segment at 7–60 (KHICCGIDCNNEADRLQCPKCLNDGVKSYFCGQECFRNSWNIHKHLHRPPNVEK) adopts a C6H2-type zinc-finger fold. C10, C15, C24, C27, C37, C41, H49, and H53 together coordinate Zn(2+). Residue H192 coordinates a protein. Zn(2+) contacts are provided by D209, D220, and H289. A protein is bound at residue H296. Zn(2+) contacts are provided by E322 and E353. A Phosphoserine modification is found at S373.

It belongs to the peptidase M24A family. Methionine aminopeptidase type 1 subfamily. Associates with the 60S ribosomal subunit of the 80S translational complex. The cofactor is Zn(2+). Requires Co(2+) as cofactor. It depends on Mn(2+) as a cofactor. Fe(2+) serves as cofactor.

The protein resides in the cytoplasm. It is found in the nucleus. The protein localises to the nucleolus. It carries out the reaction Release of N-terminal amino acids, preferentially methionine, from peptides and arylamides.. In terms of biological role, cotranslationally removes the N-terminal methionine from nascent proteins. The N-terminal methionine is often cleaved when the second residue in the primary sequence is small and uncharged (Met-Ala-, Cys, Gly, Pro, Ser, Thr, or Val). This chain is Methionine aminopeptidase 1 (fma1), found in Schizosaccharomyces pombe (strain 972 / ATCC 24843) (Fission yeast).